The sequence spans 394 residues: Glycerol-3-phosphate dehydrogenase [NAD(+)] 2 (394 aa).

Residues 41–46 (GSGNWG), K152, and A185 each bind NAD(+). K152 contributes to the substrate binding site. K243 functions as the Proton acceptor in the catalytic mechanism. NAD(+) contacts are provided by R308 and Q337. A substrate-binding site is contributed by 308–309 (RN).

It belongs to the NAD-dependent glycerol-3-phosphate dehydrogenase family.

The enzyme catalyses sn-glycerol 3-phosphate + NAD(+) = dihydroxyacetone phosphate + NADH + H(+). This chain is Glycerol-3-phosphate dehydrogenase [NAD(+)] 2 (gpd2), found in Cyberlindnera jadinii (Torula yeast).